Consider the following 140-residue polypeptide: Large ribosomal subunit protein uL14 (140 aa).

It belongs to the universal ribosomal protein uL14 family.

The chain is Large ribosomal subunit protein uL14 (RPL23) from Nicotiana tabacum (Common tobacco).